The primary structure comprises 223 residues: Thylakoid lumenal 15.0 kDa protein 2, chloroplastic (223 aa).

It localises to the plastid. It is found in the chloroplast thylakoid lumen. The polypeptide is Thylakoid lumenal 15.0 kDa protein 2, chloroplastic (Arabidopsis thaliana (Mouse-ear cress)).